Consider the following 340-residue polypeptide: Homeobox protein DBX2 (340 aa).

The homeobox DNA-binding region spans 185–244; it reads GILRRAVFSEDQRKALEKMFQKQKYISKTDRKKLAINLGLKESQVKIWFQNRRMKWRNSK. Positions 283–313 are disordered; sequence QQHPSPGWRENSPEPSERLIQGSPGAEALPP.

This sequence belongs to the H2.0 homeobox family.

It localises to the nucleus. This chain is Homeobox protein DBX2 (DBX2), found in Bos taurus (Bovine).